A 397-amino-acid chain; its full sequence is Zinc finger CCCH domain-containing protein 33 (397 aa).

5 C3H1-type zinc fingers span residues 40 to 68 (RPGEPDCSYYIRTGLCRFGSTCRFNHPRD), 85 to 113 (RIGQPECEYYLKTGTCKFGVTCKFHHPRN), 131 to 159 (RSNEVDCAYFLRTGHCKFGGTCKFNHPQP), 274 to 302 (RPGQPECQFYMKTGDCKFGTVCKFHHPRD), and 320 to 348 (RPGEPLCVFYTRYGICKFGPSCKFDHPMR). The disordered stretch occupies residues 361–397 (EVVETSTGKSRRLSVSETRQAATTSSGKDTTIDNTQQ). Positions 364–397 (ETSTGKSRRLSVSETRQAATTSSGKDTTIDNTQQ) are enriched in polar residues.

It localises to the nucleus. The polypeptide is Zinc finger CCCH domain-containing protein 33 (ZFN1) (Arabidopsis thaliana (Mouse-ear cress)).